A 307-amino-acid polypeptide reads, in one-letter code: N-acetylmuramic acid 6-phosphate etherase (307 aa).

The region spanning 57–220 is the SIS domain; the sequence is IIEAFKTNGR…TTASMIGVGK (164 aa). Catalysis depends on Glu85, which acts as the Proton donor. The active site involves Glu116.

The protein belongs to the GCKR-like family. MurNAc-6-P etherase subfamily. As to quaternary structure, homodimer.

The enzyme catalyses N-acetyl-D-muramate 6-phosphate + H2O = N-acetyl-D-glucosamine 6-phosphate + (R)-lactate. Its pathway is amino-sugar metabolism; N-acetylmuramate degradation. In terms of biological role, specifically catalyzes the cleavage of the D-lactyl ether substituent of MurNAc 6-phosphate, producing GlcNAc 6-phosphate and D-lactate. The protein is N-acetylmuramic acid 6-phosphate etherase of Alkaliphilus metalliredigens (strain QYMF).